A 63-amino-acid polypeptide reads, in one-letter code: Large ribosomal subunit protein bL28 (63 aa).

This sequence belongs to the bacterial ribosomal protein bL28 family.

The protein is Large ribosomal subunit protein bL28 of Clostridium botulinum (strain Alaska E43 / Type E3).